The following is a 600-amino-acid chain: Elongation factor 4 (600 aa).

In terms of domain architecture, tr-type G spans 5–187; the sequence is KYIRNFSIIA…AIVNKLPPPK (183 aa). Residues 17–22 and 134–137 each bind GTP; these read DHGKST and NKID.

It belongs to the TRAFAC class translation factor GTPase superfamily. Classic translation factor GTPase family. LepA subfamily.

The protein localises to the cell inner membrane. It catalyses the reaction GTP + H2O = GDP + phosphate + H(+). Its function is as follows. Required for accurate and efficient protein synthesis under certain stress conditions. May act as a fidelity factor of the translation reaction, by catalyzing a one-codon backward translocation of tRNAs on improperly translocated ribosomes. Back-translocation proceeds from a post-translocation (POST) complex to a pre-translocation (PRE) complex, thus giving elongation factor G a second chance to translocate the tRNAs correctly. Binds to ribosomes in a GTP-dependent manner. The polypeptide is Elongation factor 4 (Rickettsia bellii (strain OSU 85-389)).